Reading from the N-terminus, the 122-residue chain is Basic phospholipase A2 Ts-G6D49 (122 aa).

Cystine bridges form between Cys26-Cys115, Cys28-Cys44, Cys43-Cys95, Cys49-Cys122, Cys50-Cys88, Cys57-Cys81, and Cys75-Cys86. Residues Tyr27, Gly29, and Gly31 each contribute to the Ca(2+) site. His47 is a catalytic residue. Residue Asp48 participates in Ca(2+) binding. Residue Asp89 is part of the active site.

Requires Ca(2+) as cofactor. Expressed by the venom gland.

The protein localises to the secreted. It catalyses the reaction a 1,2-diacyl-sn-glycero-3-phosphocholine + H2O = a 1-acyl-sn-glycero-3-phosphocholine + a fatty acid + H(+). Its function is as follows. Snake venom phospholipase A2 that induces fast and sustaining local edema a few hours after injection (5-10 ug) in the hind paw, and prolongs the coagulation time of human plasma. Exhibits moderate hydrolytic activities and prefers the zwitterionic micelles (dPPC with Triton X-100) to the anionic micelles (dPPC with deoxycholate). PLA2 catalyzes the calcium-dependent hydrolysis of the 2-acyl groups in 3-sn-phosphoglycerides. The polypeptide is Basic phospholipase A2 Ts-G6D49 (Trimeresurus stejnegeri (Chinese green tree viper)).